The primary structure comprises 84 residues: Defensin-like protein 140 (84 aa).

A signal peptide spans 1–28; sequence MSKSLQLIVTVLCIFTILVLGEICLAKG. 4 cysteine pairs are disulfide-bonded: cysteine 37/cysteine 81, cysteine 46/cysteine 65, cysteine 51/cysteine 75, and cysteine 55/cysteine 77.

It belongs to the DEFL family.

Its subcellular location is the secreted. The protein is Defensin-like protein 140 (LCR15) of Arabidopsis thaliana (Mouse-ear cress).